The primary structure comprises 1032 residues: Probable ATP-dependent RNA helicase DDX46 (1032 aa).

Over residues methionine 1 to serine 24 the composition is skewed to basic residues. The tract at residues methionine 1–leucine 228 is disordered. A lipid anchor (N-myristoyl glycine) is attached at glycine 2. A compositionally biased stretch (basic and acidic residues) spans serine 26–arginine 49. 2 stretches are compositionally biased toward basic residues: residues glutamate 50–serine 73 and glutamate 81–arginine 103. Over residues lysine 112 to leucine 200 the composition is skewed to basic and acidic residues. Positions aspartate 152–lysine 197 form a coiled coil. Residue lysine 186 forms a Glycyl lysine isopeptide (Lys-Gly) (interchain with G-Cter in SUMO2) linkage. The residue at position 199 (serine 199) is a Phosphoserine. Acidic residues-rich tracts occupy residues glutamate 201–alanine 211 and glutamate 219–leucine 228. N6-acetyllysine is present on lysine 263. Position 294 is a phosphotyrosine (tyrosine 294). Phosphoserine occurs at positions 295 and 296. A Glycyl lysine isopeptide (Lys-Gly) (interchain with G-Cter in SUMO2) cross-link involves residue lysine 325. At serine 346 the chain carries Phosphoserine. Positions lysine 372–threonine 400 match the Q motif motif. The region spanning isoleucine 403–valine 581 is the Helicase ATP-binding domain. Alanine 416–threonine 423 is an ATP binding site. Positions aspartate 529–aspartate 532 match the DEAD box motif. One can recognise a Helicase C-terminal domain in the interval aspartate 592–tryptophan 753. An N6-acetyllysine modification is found at lysine 776. A Glycyl lysine isopeptide (Lys-Gly) (interchain with G-Cter in SUMO2) cross-link involves residue lysine 779. At serine 804 the chain carries Phosphoserine. Lysine 904 is subject to N6-acetyllysine. Residues lysine 908 and lysine 916 each participate in a glycyl lysine isopeptide (Lys-Gly) (interchain with G-Cter in SUMO2) cross-link. The residue at position 929 (serine 929) is a Phosphoserine.

The protein belongs to the DEAD box helicase family. DDX46/PRP5 subfamily. Component of the 17S U2 SnRNP complex, a ribonucleoprotein complex that contains small nuclear RNA (snRNA) U2 and a number of specific proteins. Within the 17S U2 SnRNP complex, DDX46 is part of the SF3B subcomplex, which is required for 'A' complex assembly formed by the stable binding of U2 snRNP to the branchpoint sequence in pre-mRNA. Recruited to the 17S U2 SnRNP complex following release of DDX42; DDX42 and DDX46 bind the SF3B subcomplex in a competitive manner.

The protein localises to the nucleus speckle. It localises to the nucleus. It is found in the cajal body. The catalysed reaction is ATP + H2O = ADP + phosphate + H(+). Component of the 17S U2 SnRNP complex of the spliceosome, a large ribonucleoprotein complex that removes introns from transcribed pre-mRNAs. The 17S U2 SnRNP complex (1) directly participates in early spliceosome assembly and (2) mediates recognition of the intron branch site during pre-mRNA splicing by promoting the selection of the pre-mRNA branch-site adenosine, the nucleophile for the first step of splicing. Within the 17S U2 SnRNP complex, DDX46 plays essential roles during assembly of pre-spliceosome and proofreading of the branch site. The sequence is that of Probable ATP-dependent RNA helicase DDX46 (DDX46) from Pongo abelii (Sumatran orangutan).